The primary structure comprises 486 residues: Malonate-semialdehyde dehydrogenase 1 (486 aa).

5 residues coordinate NAD(+): phenylalanine 154, lysine 178, glutamate 181, arginine 182, and serine 231. The active-site Nucleophile is cysteine 286. Residue glutamate 386 participates in NAD(+) binding.

This sequence belongs to the aldehyde dehydrogenase family. IolA subfamily. As to quaternary structure, homotetramer.

It carries out the reaction 3-oxopropanoate + NAD(+) + CoA + H2O = hydrogencarbonate + acetyl-CoA + NADH + H(+). The catalysed reaction is 2-methyl-3-oxopropanoate + NAD(+) + CoA + H2O = propanoyl-CoA + hydrogencarbonate + NADH + H(+). The protein operates within polyol metabolism; myo-inositol degradation into acetyl-CoA; acetyl-CoA from myo-inositol: step 7/7. Functionally, catalyzes the oxidation of malonate semialdehyde (MSA) and methylmalonate semialdehyde (MMSA) into acetyl-CoA and propanoyl-CoA, respectively. Is involved in a myo-inositol catabolic pathway. Bicarbonate, and not CO2, is the end-product of the enzymatic reaction. The chain is Malonate-semialdehyde dehydrogenase 1 from Oceanobacillus iheyensis (strain DSM 14371 / CIP 107618 / JCM 11309 / KCTC 3954 / HTE831).